A 66-amino-acid polypeptide reads, in one-letter code: ATP synthase F(0) complex subunit 8 (66 aa).

Position 1 is an N-formylmethionine (methionine 1). Residues 8–24 (TWLTMILSMFLTLFIIF) traverse the membrane as a helical segment. The residue at position 54 (lysine 54) is an N6-acetyllysine; alternate. At lysine 54 the chain carries N6-succinyllysine; alternate. An N6-acetyllysine modification is found at lysine 57.

This sequence belongs to the ATPase protein 8 family. Component of the ATP synthase complex composed at least of ATP5F1A/subunit alpha, ATP5F1B/subunit beta, ATP5MC1/subunit c (homooctomer), MT-ATP6/subunit a, MT-ATP8/subunit 8, ATP5ME/subunit e, ATP5MF/subunit f, ATP5MG/subunit g, ATP5MK/subunit k, ATP5MJ/subunit j, ATP5F1C/subunit gamma, ATP5F1D/subunit delta, ATP5F1E/subunit epsilon, ATP5PF/subunit F6, ATP5PB/subunit b, ATP5PD/subunit d, ATP5PO/subunit OSCP. ATP synthase complex consists of a soluble F(1) head domain (subunits alpha(3) and beta(3)) - the catalytic core - and a membrane F(0) domain - the membrane proton channel (subunits c, a, 8, e, f, g, k and j). These two domains are linked by a central stalk (subunits gamma, delta, and epsilon) rotating inside the F1 region and a stationary peripheral stalk (subunits F6, b, d, and OSCP). Interacts with PRICKLE3.

It localises to the mitochondrion membrane. Its function is as follows. Subunit 8, of the mitochondrial membrane ATP synthase complex (F(1)F(0) ATP synthase or Complex V) that produces ATP from ADP in the presence of a proton gradient across the membrane which is generated by electron transport complexes of the respiratory chain. ATP synthase complex consist of a soluble F(1) head domain - the catalytic core - and a membrane F(1) domain - the membrane proton channel. These two domains are linked by a central stalk rotating inside the F(1) region and a stationary peripheral stalk. During catalysis, ATP synthesis in the catalytic domain of F(1) is coupled via a rotary mechanism of the central stalk subunits to proton translocation. In vivo, can only synthesize ATP although its ATP hydrolase activity can be activated artificially in vitro. Part of the complex F(0) domain. This chain is ATP synthase F(0) complex subunit 8, found in Bos taurus (Bovine).